A 586-amino-acid chain; its full sequence is Mitochondrial tRNA methylthiotransferase CDK5RAP1 (586 aa).

The transit peptide at 1-30 directs the protein to the mitochondrion; it reads MHPLQRVFRAQRLSAPLTSMCWVLLRTFRA. The disordered stretch occupies residues 68-90; it reads ASVPQEKPSSPEVEDPPPYLSGD. The region spanning 97–217 is the MTTase N-terminal domain; sequence RKVYLETYGC…LPRLLAVVES (121 aa). The [4Fe-4S] cluster site is built by Cys-106, Cys-142, Cys-180, Cys-255, Cys-259, and Cys-262. One can recognise a Radical SAM core domain in the interval 241 to 495; the sequence is SPSATSAFVS…ITVFREEASK (255 aa). Positions 498–573 constitute a TRAM domain; sequence ATSVGCTQLV…SQTLKGHILC (76 aa).

It belongs to the methylthiotransferase family. MiaB subfamily. In terms of assembly, interacts with CDK5R1 (p35 form). CDK5RAP1, CDK5RAP2 and CDK5RAP3 show competitive binding to CDK5R1. Forms a complex with CDK5R1 and CDK5. [4Fe-4S] cluster is required as a cofactor. Expressed in brain.

The protein localises to the mitochondrion inner membrane. The enzyme catalyses N(6)-dimethylallyladenosine(37) in tRNA + (sulfur carrier)-SH + AH2 + 2 S-adenosyl-L-methionine = 2-methylsulfanyl-N(6)-dimethylallyladenosine(37) in tRNA + (sulfur carrier)-H + 5'-deoxyadenosine + L-methionine + A + S-adenosyl-L-homocysteine + 2 H(+). Methylthiotransferase that catalyzes the conversion of N6-(dimethylallyl)adenosine (i(6)A) to 2-methylthio-N6-(dimethylallyl)adenosine (ms(2)i(6)A) at position 37 (adjacent to the 3'-end of the anticodon) of four mitochondrial DNA-encoded tRNAs (Ser(UCN), Phe, Tyr and Trp). Essential for efficient and highly accurate protein translation by the ribosome. Specifically inhibits CDK5 activation by CDK5R1. Essential for efficient mitochondrial protein synthesis and respiratory chain. This Rattus norvegicus (Rat) protein is Mitochondrial tRNA methylthiotransferase CDK5RAP1 (Cdk5rap1).